The primary structure comprises 578 residues: Triokinase/FMN cyclase (578 aa).

Residues 9–336 form the DhaK domain; it reads SVEGCAGDAL…IDAETNAKAW (328 aa). Dihydroxyacetone contacts are provided by residues 56-59, Lys-109, and Asp-114; that span reads GSGH. Residue His-221 is the Tele-hemiaminal-histidine intermediate of the active site. Positions 372-571 constitute a DhaL domain; that stretch reads KQMTLVLDRI…AAAIFRAILE (200 aa). Residues 401–404, 446–447, Gly-486, and 494–495 each bind ATP; these read DGDC, SS, and TM. Phosphoserine occurs at positions 511 and 545. 556 to 558 provides a ligand contact to ATP; that stretch reads DPG.

This sequence belongs to the dihydroxyacetone kinase (DAK) family. In terms of assembly, homodimer. Interacts with IFIH1 (via the CARD domains), the interaction is inhibited by viral infection. It depends on Mg(2+) as a cofactor. The cofactor is Mn(2+). Co(2+) serves as cofactor.

It carries out the reaction dihydroxyacetone + ATP = dihydroxyacetone phosphate + ADP + H(+). The catalysed reaction is D-glyceraldehyde + ATP = D-glyceraldehyde 3-phosphate + ADP + H(+). It catalyses the reaction FAD = riboflavin cyclic-4',5'-phosphate + AMP + H(+). Its activity is regulated as follows. Each activity is inhibited by the substrate(s) of the other. Functionally, catalyzes both the phosphorylation of dihydroxyacetone and of glyceraldehyde, and the splitting of ribonucleoside diphosphate-X compounds among which FAD is the best substrate. Represses IFIH1-mediated cellular antiviral response. This is Triokinase/FMN cyclase (Tkfc) from Rattus norvegicus (Rat).